Reading from the N-terminus, the 2522-residue chain is Unconventional myosin-IXAa (2522 aa).

In terms of domain architecture, Ras-associating spans 15–113 (SELTLRIYPG…YRFLLREKNL (99 aa)). One can recognise a Myosin motor domain in the interval 147–1007 (KDFDDLCNLP…ERQRLQDLLH (861 aa)). The helical transmembrane segment at 176–196 (IYTYVGSILIVINPFKFLPIY) threads the bilayer. 240–247 (GESGSGKT) is a binding site for ATP. A disordered region spans residues 767–802 (VNRRNPRTPLSDLQGSNAINQREGWNGRPGRQNRLS). Over residues 777–786 (SDLQGSNAIN) the composition is skewed to polar residues. Residues 888–910 (LNKLMETLGQSQPYFVKCIRSNS) are actin-binding. IQ domains are found at residues 1012 to 1039 (SRIV…AACQ), 1063 to 1092 (QEGA…ASVL), 1102 to 1131 (QRRA…ATIR), and 1125 to 1154 (QRDA…QRLK). A neck or regulatory domain region spans residues 1012 to 1149 (SRIVYLQRRF…LARQRFRELQ (138 aa)). The tail stretch occupies residues 1150 to 2497 (KQRLKITHLP…LQGAKSSPQR (1348 aa)). 6 disordered regions span residues 1218–1254 (GMAP…RRMR), 1318–1409 (DKAP…STRR), 1424–1612 (NEAD…GNIF), 1630–1754 (NQEK…GRVR), 1799–1827 (RLSP…VKRR), and 1962–1983 (LDSS…KDTD). The span at 1229-1242 (TIRERPRTLEDPNQ) shows a compositional bias: basic and acidic residues. Composition is skewed to polar residues over residues 1330–1349 (SPSS…STPD) and 1366–1390 (SLPT…NSVT). 2 stretches are compositionally biased toward basic and acidic residues: residues 1399-1408 (PSKDKKESTR) and 1426-1435 (ADVKPLEVKD). Residues 1437–1454 (AAQTSEPPSPAQPSTDSS) show a composition bias toward polar residues. Positions 1456 to 1525 (VLEKLEKLNE…LRRIEQSRQE (70 aa)) form a coiled coil. Basic and acidic residues-rich tracts occupy residues 1458–1484 (EKLE…EMME), 1492–1523 (ILEE…EQSR), 1549–1566 (PARE…RPKD), and 1580–1589 (LESRGDEARS). Composition is skewed to polar residues over residues 1594 to 1604 (KPSNQNVNISM) and 1631 to 1641 (QEKTPGAQNEV). The span at 1656 to 1665 (PGHKKARMAR) shows a compositional bias: basic residues. A compositionally biased stretch (acidic residues) spans 1681–1690 (GESEEEEYDE). Composition is skewed to basic and acidic residues over residues 1738 to 1753 (LGKH…DGRV) and 1810 to 1822 (LQRE…EPSP). The segment at 1990–2039 (GHIFKSTQYSIPTYCEYCSSLIWMMDKACVCKLCRYACHRKCCQKMTTKC) adopts a Phorbol-ester/DAG-type zinc-finger fold. One can recognise a Rho-GAP domain in the interval 2054–2242 (VELSRLTNDE…LIICEQMNKY (189 aa)). 2 disordered regions span residues 2274–2325 (PVHR…QEEK) and 2348–2522 (LEPR…EFMV). Residues 2317 to 2344 (QVAMQQEEKVLTEQIESLQKEKEELTFE) adopt a coiled-coil conformation. Residues 2366–2383 (TADSSENLNVDSEGATSD) are compositionally biased toward polar residues. Over residues 2413-2429 (SLDSIDSCSTVSSVSSS) the composition is skewed to low complexity. Residues 2436 to 2448 (RTHKLSLRSKSPS) show a composition bias toward basic residues. Over residues 2497–2506 (RHREQKKDPE) the composition is skewed to basic and acidic residues.

It belongs to the TRAFAC class myosin-kinesin ATPase superfamily. Myosin family.

It localises to the membrane. Its subcellular location is the cytoplasm. The protein resides in the synapse. It is found in the cell projection. The protein localises to the growth cone. Its function is as follows. Myosins are actin-based motor molecules with ATPase activity. Unconventional myosins serve in intracellular movements. Regulates Rho by stimulating it's GTPase activity in neurons. Required for the regulation of neurite branching and motor neuron axon guidance. The polypeptide is Unconventional myosin-IXAa (myo9aa) (Danio rerio (Zebrafish)).